A 571-amino-acid polypeptide reads, in one-letter code: MRTSQYLLSTLKETPADAVVISHQLLLRAGMIRRLASGLYTWLPMGLRVLRKVETIVREEMNAAGALEVLMPAVQPAELWQESGRWEQYGPELLRLKDRHEREFCVGPTHEEVITDLARNELNSYKQLPINFYQIQTKFRDEIRPRFGLMRGREFIMKDAYSFHLSQDSLQQTYDGMYQAYSKIFSRLGLDFRPVQADNGSIGGSGSHEFHVLANSGEDDIVFSDSSDYAANIEKAEAVPRESARGSATEDMRLVDTPNTKTIAALVDGFQLPIEKTIKTLVVHGAEEGTLVALIVRGDHELNEIKAANQPLVASPLVFASEAEIRAAIGAGPGSLGPVNLPIACIVDRSVALMSDFAAGANIEDKHYFGVNWERDLPLPEVADLRNVVEGDPSPDGKGTLVIKRGIEVGHIFQLGTKYSEAMKLSVLSEQGKPVNLIMGCYGIGVSRVVAAAIEQNHDERGILWPSALAPFQIALVPLKYETESVKQATDKLYAELTAAGFEVLLDDRDKKTSPGVKFADMELIGIPHRIVISDRGLSEGVLEYKGRRDSESQNLPIGELMSFITEKLSR.

It belongs to the class-II aminoacyl-tRNA synthetase family. ProS type 1 subfamily. In terms of assembly, homodimer.

It localises to the cytoplasm. It carries out the reaction tRNA(Pro) + L-proline + ATP = L-prolyl-tRNA(Pro) + AMP + diphosphate. Functionally, catalyzes the attachment of proline to tRNA(Pro) in a two-step reaction: proline is first activated by ATP to form Pro-AMP and then transferred to the acceptor end of tRNA(Pro). As ProRS can inadvertently accommodate and process non-cognate amino acids such as alanine and cysteine, to avoid such errors it has two additional distinct editing activities against alanine. One activity is designated as 'pretransfer' editing and involves the tRNA(Pro)-independent hydrolysis of activated Ala-AMP. The other activity is designated 'posttransfer' editing and involves deacylation of mischarged Ala-tRNA(Pro). The misacylated Cys-tRNA(Pro) is not edited by ProRS. This chain is Proline--tRNA ligase, found in Pseudomonas aeruginosa (strain LESB58).